The primary structure comprises 308 residues: 4-hydroxyproline 2-epimerase (308 aa).

The active-site Proton acceptor is the C88. Substrate-binding positions include 89–90 (GH), H208, and D232. C236 (proton donor) is an active-site residue. 237–238 (GT) contacts substrate.

This sequence belongs to the proline racemase family.

It carries out the reaction trans-4-hydroxy-L-proline = cis-4-hydroxy-D-proline. Functionally, catalyzes the epimerization of trans-4-hydroxy-L-proline (t4LHyp) to cis-4-hydroxy-D-proline (c4DHyp). Is likely involved in a degradation pathway that converts t4LHyp to alpha-ketoglutarate. Can also catalyze the epimerization of trans-3-hydroxy-L-proline (t3LHyp) to cis-3-hydroxy-D-proline (c3DHyp), albeit with 19-fold lower efficiency. Displays no proline racemase activity. The chain is 4-hydroxyproline 2-epimerase from Chromobacterium violaceum (strain ATCC 12472 / DSM 30191 / JCM 1249 / CCUG 213 / NBRC 12614 / NCIMB 9131 / NCTC 9757 / MK).